The sequence spans 563 residues: Tripeptidyl-peptidase 1 (563 aa).

The first 19 residues, 1–19 (MRLRTCLLGLLALCVASKC), serve as a signal peptide directing secretion. The propeptide at 20 to 195 (SYSPEPDQQR…PEPQVSGTVG (176 aa)) is removed in mature form. Cysteine 111 and cysteine 122 form a disulfide bridge. A Peptidase S53 domain is found at 199 to 563 (GVTPSVIRQR…PALLKALIKP (365 aa)). N-linked (GlcNAc...) asparagine glycosylation is found at asparagine 210 and asparagine 222. Residues glutamate 272 and aspartate 276 each act as charge relay system in the active site. N-linked (GlcNAc...) asparagine glycosylation is found at asparagine 286, asparagine 313, and asparagine 443. Intrachain disulfides connect cysteine 365/cysteine 526 and cysteine 522/cysteine 537. Serine 475 acts as the Charge relay system in catalysis. Residues aspartate 517 and valine 518 each contribute to the Ca(2+) site. Residues glycine 539, glycine 541, and aspartate 543 each coordinate Ca(2+).

In terms of assembly, monomer. Interacts with CLN5. Interacts with CLN3. Ca(2+) is required as a cofactor. In terms of processing, activated by autocatalytic proteolytical processing upon acidification. N-glycosylation is required for processing and activity.

The protein localises to the lysosome. It is found in the melanosome. The enzyme catalyses Release of an N-terminal tripeptide from a polypeptide, but also has endopeptidase activity.. In terms of biological role, lysosomal serine protease with tripeptidyl-peptidase I activity. May act as a non-specific lysosomal peptidase which generates tripeptides from the breakdown products produced by lysosomal proteinases. Requires substrates with an unsubstituted N-terminus. The polypeptide is Tripeptidyl-peptidase 1 (TPP1) (Canis lupus familiaris (Dog)).